An 88-amino-acid chain; its full sequence is UPF0250 protein bbp_432 (88 aa).

Belongs to the UPF0250 family.

The polypeptide is UPF0250 protein bbp_432 (Buchnera aphidicola subsp. Baizongia pistaciae (strain Bp)).